A 96-amino-acid polypeptide reads, in one-letter code: Aspartyl/glutamyl-tRNA(Asn/Gln) amidotransferase subunit C (96 aa).

The protein belongs to the GatC family. As to quaternary structure, heterotrimer of A, B and C subunits.

The catalysed reaction is L-glutamyl-tRNA(Gln) + L-glutamine + ATP + H2O = L-glutaminyl-tRNA(Gln) + L-glutamate + ADP + phosphate + H(+). The enzyme catalyses L-aspartyl-tRNA(Asn) + L-glutamine + ATP + H2O = L-asparaginyl-tRNA(Asn) + L-glutamate + ADP + phosphate + 2 H(+). Allows the formation of correctly charged Asn-tRNA(Asn) or Gln-tRNA(Gln) through the transamidation of misacylated Asp-tRNA(Asn) or Glu-tRNA(Gln) in organisms which lack either or both of asparaginyl-tRNA or glutaminyl-tRNA synthetases. The reaction takes place in the presence of glutamine and ATP through an activated phospho-Asp-tRNA(Asn) or phospho-Glu-tRNA(Gln). The chain is Aspartyl/glutamyl-tRNA(Asn/Gln) amidotransferase subunit C from Symbiobacterium thermophilum (strain DSM 24528 / JCM 14929 / IAM 14863 / T).